A 415-amino-acid polypeptide reads, in one-letter code: Acetyl-CoA acetyltransferase 1 (415 aa).

Catalysis depends on Cys99, which acts as the Acyl-thioester intermediate. A CoA-binding site is contributed by Lys239. Residue Ala256 participates in K(+) binding. Ser260 serves as a coordination point for CoA. Residue Val357 participates in K(+) binding. Active-site proton acceptor residues include His361 and Cys391.

Belongs to the thiolase-like superfamily. Thiolase family. As to expression, expressed in the vascular system of roots, cotyledons, young leaves, fully expanded leaves, stems, flowers, and funiculi of siliques.

It is found in the cytoplasm. Its subcellular location is the peroxisome. The enzyme catalyses 2 acetyl-CoA = acetoacetyl-CoA + CoA. Its pathway is metabolic intermediate biosynthesis; (R)-mevalonate biosynthesis; (R)-mevalonate from acetyl-CoA: step 1/3. Catalyzes the condensation of two molecules of acetyl-CoA to produce acetoacetyl-CoA. The chain is Acetyl-CoA acetyltransferase 1 from Arabidopsis thaliana (Mouse-ear cress).